Consider the following 771-residue polypeptide: Kinase suppressor of Ras A (771 aa).

A compositionally biased stretch (polar residues) spans 152–169; it reads SRTSSGSTDEPSGQSTPA. Residues 152–172 form a disordered region; that stretch reads SRTSSGSTDEPSGQSTPAIVT. The segment at 215-269 adopts a Phorbol-ester/DAG-type zinc-finger fold; the sequence is PHKWHRSTKFRFSGDAVCHFCQRPLGFGFLNAWEKCRSCKWKVHTQCKGRVGDSC. Disordered regions lie at residues 290–339 and 414–433; these read GMWK…ISGN and DSTG…EAVD. Over residues 318–331 the composition is skewed to low complexity; the sequence is SSSSTNSSAPSTPA. One can recognise a Protein kinase domain in the interval 477–748; it reads DKQAPIIGRG…TDINLKLTAL (272 aa). ATP is bound by residues 483-491 and lysine 503; that span reads IGRGRFGKV. Aspartate 600 functions as the Proton acceptor in the catalytic mechanism.

Belongs to the protein kinase superfamily. TKL Ser/Thr protein kinase family. In terms of assembly, interacts with mek-2. The cofactor is Mg(2+).

The catalysed reaction is L-seryl-[protein] + ATP = O-phospho-L-seryl-[protein] + ADP + H(+). The enzyme catalyses L-threonyl-[protein] + ATP = O-phospho-L-threonyl-[protein] + ADP + H(+). Functionally, serine/threonine-protein kinase which positively regulates Ras-mediated signaling probably acting at the level of let-60/ras or/and lin-45/raf. Involved in sex myoblast migration. Plays a role in responses to M.nematophilum-mediated bacterial infection by promoting tail swelling and preventing constipation. Functions redundantly with ksr-2 in the Ras-mediated regulation of larval survival, the development of excretory canal and in mpk-1 phosphorylation in somatic cells. In addition, involved in determining vulval precursor cell fate during vulval induction independently of its kinase activity. Plays a role in egg-laying. This is Kinase suppressor of Ras A from Caenorhabditis elegans.